Here is a 655-residue protein sequence, read N- to C-terminus: Inactive serine protease scarface (655 aa).

The N-terminal stretch at 1 to 24 is a signal peptide; the sequence is MSASHFREQLALCITLAVLAAASG. 2 stretches are compositionally biased toward polar residues: residues 213-225 and 237-252; these read TQAP…TTAV and PSTT…QTSR. Residues 213-319 are disordered; the sequence is TQAPFRPQPT…QPSNQKPIYR (107 aa). The tract at residues 343–407 is CLIP; it reads KCASALVCTS…PNYVDPWPVN (65 aa). 7 disulfide bridges follow: C344–C394, C350–C383, C356–C395, C450–C466, C547–C605, C579–C587, and C595–C623. One can recognise a Peptidase S1 domain in the interval 421–644; sequence PTGVKDLDAN…DIKWINTAFA (224 aa).

This sequence belongs to the peptidase S1 family.

Its subcellular location is the secreted. In terms of biological role, inactive serine protease that plays a role in germ-band retraction and dorsal closure morphogenesis in embryogenesis; contributes to amnioserosa attachment and epithelial apico-basal polarity by regulating the localization of laminin LanA on the apical side of the amnioserosa epithelium. Contributes to epithelial morphogenesis probably by regulating the bsk/JNK pathway, as part of a negative-feedback loop, and by modulating the cross-talk between the Egfr, bsk/JNK and dpp signal transduction pathways. In larval development, antagonizes the morphogenetic movements controlled by the bsk/JNK signaling including male genitalia formation and thorax development. This chain is Inactive serine protease scarface, found in Drosophila melanogaster (Fruit fly).